An 84-amino-acid chain; its full sequence is M-myrmeciitoxin-Mb2a (84 aa).

An N-terminal signal peptide occupies residues 1-21; it reads MKLSCLLLTLAIIFVLTIVHA. Residues 22-48 constitute a propeptide that is removed on maturation; it reads PNVKAKALADPESDAVGFADAVGEADP.

Belongs to the formicidae venom precursor-01 superfamily. Ant pilosulin family. In terms of tissue distribution, expressed by the venom gland.

It localises to the secreted. Its function is as follows. Shows activity against E.coli and S.aureus (MIC&lt;6.25 uM), moderate activity against P.aeruginosa (MIC&lt;25 uM), weak activity against B.subtilis (MIC&lt;50 uM), and has no effect against L.garvieae, C.albicans, and S.cerevisiae. Has no hemolytic nor cytolytic activity. Causes an IgE-independent histamine release. In Myrmecia banksi (Jack jumper ant), this protein is M-myrmeciitoxin-Mb2a.